A 688-amino-acid chain; its full sequence is G protein-coupled receptor kinase 3 (688 aa).

Residues 1–190 (MADLEAVLAD…ELNIHLTMND (190 aa)) form an N-terminal region. The RGS domain maps to 54 to 175 (TFDKIFNQRI…MESDKFTRFC (122 aa)). In terms of domain architecture, Protein kinase spans 191-453 (FSVHRIIGRG…AQELKTHDFF (263 aa)). ATP contacts are provided by residues 197 to 205 (IGRGGFGEV) and K220. D317 functions as the Proton acceptor in the catalytic mechanism. The region spanning 454–521 (RGIDWQHVYL…VISERWQQEV (68 aa)) is the AGC-kinase C-terminal domain. In terms of domain architecture, PH spans 558–652 (DCIVHGYMLK…WKKELTETFM (95 aa)).

The protein belongs to the protein kinase superfamily. AGC Ser/Thr protein kinase family. GPRK subfamily. Interacts with GIT1. Post-translationally, ubiquitinated. Ubiquitous; brain, spleen &gt; heart, lung &gt; kidney.

It is found in the postsynapse. The protein resides in the presynapse. It carries out the reaction [beta-adrenergic receptor] + ATP = [beta-adrenergic receptor]-phosphate + ADP + H(+). In terms of biological role, specifically phosphorylates the agonist-occupied form of the beta-adrenergic and closely related receptors. This Bos taurus (Bovine) protein is G protein-coupled receptor kinase 3.